The sequence spans 346 residues: Methylthioribose-1-phosphate isomerase (346 aa).

Residues 54–56 (RGA), arginine 91, and glutamine 192 contribute to the substrate site. Aspartate 233 serves as the catalytic Proton donor. 243 to 244 (NK) lines the substrate pocket.

This sequence belongs to the eIF-2B alpha/beta/delta subunits family. MtnA subfamily.

The catalysed reaction is 5-(methylsulfanyl)-alpha-D-ribose 1-phosphate = 5-(methylsulfanyl)-D-ribulose 1-phosphate. Its pathway is amino-acid biosynthesis; L-methionine biosynthesis via salvage pathway; L-methionine from S-methyl-5-thio-alpha-D-ribose 1-phosphate: step 1/6. Functionally, catalyzes the interconversion of methylthioribose-1-phosphate (MTR-1-P) into methylthioribulose-1-phosphate (MTRu-1-P). This Yersinia pseudotuberculosis serotype O:1b (strain IP 31758) protein is Methylthioribose-1-phosphate isomerase.